We begin with the raw amino-acid sequence, 115 residues long: MNLMATLLTNTMLTSLMVLIAFWLPQTYTYSEKTSPYECGFDPMGSARLPFSMKFFLVAITFLLFDLEIALLLPLPWAIQANNTNLTLLMSFMLIILLAIGLAYEWLQKGLEWTK.

3 helical membrane passes run 3-23 (LMAT…IAFW), 55-75 (FFLV…LLPL), and 86-106 (LTLL…AYEW).

It belongs to the complex I subunit 3 family. As to quaternary structure, core subunit of respiratory chain NADH dehydrogenase (Complex I) which is composed of 45 different subunits. Interacts with TMEM186. Interacts with TMEM242.

Its subcellular location is the mitochondrion inner membrane. It catalyses the reaction a ubiquinone + NADH + 5 H(+)(in) = a ubiquinol + NAD(+) + 4 H(+)(out). In terms of biological role, core subunit of the mitochondrial membrane respiratory chain NADH dehydrogenase (Complex I) which catalyzes electron transfer from NADH through the respiratory chain, using ubiquinone as an electron acceptor. Essential for the catalytic activity of complex I. This is NADH-ubiquinone oxidoreductase chain 3 from Mammuthus primigenius (Siberian woolly mammoth).